A 1170-amino-acid polypeptide reads, in one-letter code: NPC intracellular sterol transporter 1-related protein 1 (1170 aa).

Positions 1–19 (MNVLWIIALVGQLMRLVQG) are cleaved as a signal peptide. Cystine bridges form between cysteine 23–cysteine 75, cysteine 29–cysteine 41, cysteine 64–cysteine 110, cysteine 76–cysteine 114, cysteine 98–cysteine 230, cysteine 101–cysteine 156, cysteine 223–cysteine 235, and cysteine 232–cysteine 239. N-linked (GlcNAc...) asparagine glycans are attached at residues asparagine 123, asparagine 145, and asparagine 178. Residues 260–280 (LSVLIFYTICALFAFMWYYLC) traverse the membrane as a helical segment. N-linked (GlcNAc...) asparagine glycosylation is present at asparagine 314. Residues 341–361 (ILITTVFSIFVFSFIIFQYAT) traverse the membrane as a helical segment. Asparagine 401 carries N-linked (GlcNAc...) asparagine glycosylation. 2 disulfide bridges follow: cysteine 438–cysteine 447 and cysteine 473–cysteine 480. Residue asparagine 513 is glycosylated (N-linked (GlcNAc...) asparagine). The next 6 membrane-spanning stretches (helical) occupy residues 556-576 (NDIS…TWAL), 585-605 (LLLG…AAGF), 616-636 (IIAE…IFLI), 667-687 (ILMS…VTMP), 698-718 (VSVI…LSLY), and 752-772 (IIII…EIQF). Residues 557-717 (DISTVAISYL…LTAYVSILSL (161 aa)) enclose the SSD domain. Intrachain disulfides connect cysteine 822–cysteine 828, cysteine 868–cysteine 925, cysteine 869–cysteine 891, and cysteine 879–cysteine 888. Asparagine 900 and asparagine 940 each carry an N-linked (GlcNAc...) asparagine glycan. The next 5 helical transmembrane spans lie at 1000–1020 (LTLK…SVFL), 1027–1047 (FLLA…MALL), 1054–1074 (VSLV…VHIV), 1099–1119 (IGES…CVLA), and 1133–1153 (MWFT…PALL).

The protein belongs to the patched family.

It localises to the vacuole membrane. Functionally, involved in sphingolipid trafficking. May recycle sphingolipids between cellular membranous compartments. This is NPC intracellular sterol transporter 1-related protein 1 from Saccharomyces cerevisiae (strain ATCC 204508 / S288c) (Baker's yeast).